The following is a 395-amino-acid chain: Xylose isomerase (395 aa).

Active-site residues include histidine 54 and aspartate 57. Positions 181, 217, 220, 245, 255, 257, and 293 each coordinate Mg(2+).

The protein belongs to the xylose isomerase family. In terms of assembly, homotetramer. Requires Mg(2+) as cofactor.

It localises to the cytoplasm. It carries out the reaction alpha-D-xylose = alpha-D-xylulofuranose. In Arthrobacter sp. (strain FB24), this protein is Xylose isomerase.